The following is a 137-amino-acid chain: Interferon-induced transmembrane protein 3 (137 aa).

Residues 1–57 (MNHTSQAFVNAATGGQPPNYERIKEEYEVSELGAPHGSASVRTTVINMPREVSVPDH) lie on the Cytoplasmic side of the membrane. At Tyr-20 the chain carries Phosphotyrosine. A Glycyl lysine isopeptide (Lys-Gly) (interchain with G-Cter in ubiquitin) cross-link involves residue Lys-24. Tyr-27 is modified (phosphotyrosine). The segment at residues 58–78 (VVWSLFNTLFMNFCCLGFIAY) is an intramembrane region (helical). Residues 60–93 (WSLFNTLFMNFCCLGFIAYAYSVKSRDRKMVGDM) form an interaction with SPP1 region. S-palmitoyl cysteine attachment occurs at residues Cys-71 and Cys-72. The Cytoplasmic segment spans residues 79 to 109 (AYSVKSRDRKMVGDMTGAQAYASTAKCLNIS). Glycyl lysine isopeptide (Lys-Gly) (interchain with G-Cter in ubiquitin) cross-links involve residues Lys-83, Lys-88, and Lys-104. Residue Cys-105 is the site of S-palmitoyl cysteine attachment. The tract at residues 108 to 133 (ISSLVLSILMVIITIVTVVIIALNAP) is interaction with VAPA. The chain crosses the membrane as a helical span at residues 110-130 (SLVLSILMVIITIVTVVIIAL). Over 131 to 137 (NAPRLQT) the chain is Extracellular.

This sequence belongs to the CD225/Dispanin family. As to quaternary structure, interacts with ATP6V0B. Interacts with CD81. Interacts with SPP1; the interaction reduces OPN expression. Interacts with BRI3. In terms of processing, polyubiquitinated with both 'Lys-48' and 'Lys-63' linkages. Ubiquitination negatively regulates antiviral activity. Lys-24 is the most prevalent ubiquitination site. Post-translationally, phosphorylation at Tyr-20 is required for endosomal and lysosomal location.

The protein localises to the cell membrane. It localises to the late endosome membrane. It is found in the early endosome membrane. Its subcellular location is the lysosome membrane. The protein resides in the cytoplasm. The protein localises to the perinuclear region. Functionally, IFN-induced antiviral protein which disrupts intracellular cholesterol homeostasis. Inhibits the entry of viruses to the host cell cytoplasm by preventing viral fusion with cholesterol depleted endosomes. May inactivate new enveloped viruses which buds out of the infected cell, by letting them go out with a cholesterol depleted membrane. Active against multiple viruses. Plays a critical role in the structural stability and function of vacuolar ATPase (v-ATPase). Establishes physical contact with the v-ATPase of endosomes which is critical for proper clathrin localization and is also required for the function of the v-ATPase to lower the pH in phagocytic endosomes thus establishing an antiviral state. This Rattus norvegicus (Rat) protein is Interferon-induced transmembrane protein 3.